The sequence spans 125 residues: Small ribosomal subunit protein bS6m (125 aa).

This sequence belongs to the bacterial ribosomal protein bS6 family. As to quaternary structure, component of the mitochondrial ribosome small subunit (28S) which comprises a 12S rRNA and about 30 distinct proteins.

It is found in the mitochondrion. The polypeptide is Small ribosomal subunit protein bS6m (Mrps6) (Mus musculus (Mouse)).